A 94-amino-acid polypeptide reads, in one-letter code: MFTINAEVRKEQGKGASRRLRAANKFPAIIYGGAAAPVAIELDHDKVWNMQDKAEFYSEVLTVVVDGKEEKVKVQAVQRHAFKPKLTHIDFVRA.

It belongs to the bacterial ribosomal protein bL25 family. As to quaternary structure, part of the 50S ribosomal subunit; part of the 5S rRNA/L5/L18/L25 subcomplex. Contacts the 5S rRNA. Binds to the 5S rRNA independently of L5 and L18.

This is one of the proteins that binds to the 5S RNA in the ribosome where it forms part of the central protuberance. This Klebsiella pneumoniae subsp. pneumoniae (strain ATCC 700721 / MGH 78578) protein is Large ribosomal subunit protein bL25.